The chain runs to 88 residues: Small ribosomal subunit protein uS17 (88 aa).

Belongs to the universal ribosomal protein uS17 family. As to quaternary structure, part of the 30S ribosomal subunit.

Its function is as follows. One of the primary rRNA binding proteins, it binds specifically to the 5'-end of 16S ribosomal RNA. The sequence is that of Small ribosomal subunit protein uS17 from Lawsonia intracellularis (strain PHE/MN1-00).